The sequence spans 240 residues: Uridylate kinase (240 aa).

12 to 15 is an ATP binding site; sequence KLSG. An involved in allosteric activation by GTP region spans residues 20–25; the sequence is GSQGFG. Gly-54 contacts UMP. ATP-binding residues include Gly-55 and Arg-59. Residues Asp-74 and 135–142 contribute to the UMP site; that span reads TGNPYFST. ATP is bound by residues Tyr-168 and Asp-171.

Belongs to the UMP kinase family. As to quaternary structure, homohexamer.

The protein resides in the cytoplasm. The enzyme catalyses UMP + ATP = UDP + ADP. It participates in pyrimidine metabolism; CTP biosynthesis via de novo pathway; UDP from UMP (UMPK route): step 1/1. Allosterically activated by GTP. Inhibited by UTP. Functionally, catalyzes the reversible phosphorylation of UMP to UDP. In Desulfitobacterium hafniense (strain Y51), this protein is Uridylate kinase.